A 702-amino-acid chain; its full sequence is Polyribonucleotide nucleotidyltransferase (702 aa).

Asp487 and Asp493 together coordinate Mg(2+). The KH domain maps to 554–613 (PKILTMQINPDKIRDVIGPSGKQINKIIEETGVKIDIEQDGTIFISSVNEEMNKKAKKII). Residues 623-691 (GQVYLGKVKR…KQGRVNLSRK (69 aa)) enclose the S1 motif domain.

Belongs to the polyribonucleotide nucleotidyltransferase family. Requires Mg(2+) as cofactor.

It localises to the cytoplasm. It carries out the reaction RNA(n+1) + phosphate = RNA(n) + a ribonucleoside 5'-diphosphate. In terms of biological role, involved in mRNA degradation. Catalyzes the phosphorolysis of single-stranded polyribonucleotides processively in the 3'- to 5'-direction. The chain is Polyribonucleotide nucleotidyltransferase from Anoxybacillus flavithermus (strain DSM 21510 / WK1).